The primary structure comprises 473 residues: Glucose-1-phosphate adenylyltransferase small subunit, chloroplastic/amyloplastic (473 aa).

The tract at residues 1-36 is disordered; it reads MDVPLASKTFPSPSPSKREQCNIDGHKSSSKHADLN. Residues 16–36 are compositionally biased toward basic and acidic residues; it reads SKREQCNIDGHKSSSKHADLN.

The protein belongs to the bacterial/plant glucose-1-phosphate adenylyltransferase family. As to quaternary structure, heterotetramer. In terms of tissue distribution, abundantly expressed in the whole grains, a slightly less abundant expression is seen in leaves, while a low level expression is seen in the roots. A greater expression is seen in the endosperm than in the embryo and pericarp layers.

It localises to the plastid. The protein localises to the chloroplast. It is found in the amyloplast. It catalyses the reaction alpha-D-glucose 1-phosphate + ATP + H(+) = ADP-alpha-D-glucose + diphosphate. Its pathway is glycan biosynthesis; starch biosynthesis. With respect to regulation, insensitive to 3'phosphoglycerate and orthophosphate. In terms of biological role, this protein plays a role in synthesis of starch. It catalyzes the synthesis of the activated glycosyl donor, ADP-glucose from Glc-1-P and ATP. This Triticum aestivum (Wheat) protein is Glucose-1-phosphate adenylyltransferase small subunit, chloroplastic/amyloplastic (AGP-S).